Here is a 327-residue protein sequence, read N- to C-terminus: Malate dehydrogenase (327 aa).

11–17 serves as a coordination point for NAD(+); that stretch reads GAAGQIG. Positions 92 and 98 each coordinate substrate. NAD(+) is bound by residues asparagine 105, glutamine 112, and 129–131; that span reads VGN. The substrate site is built by asparagine 131 and arginine 162. The active-site Proton acceptor is the histidine 187.

This sequence belongs to the LDH/MDH superfamily. MDH type 2 family.

It catalyses the reaction (S)-malate + NAD(+) = oxaloacetate + NADH + H(+). In terms of biological role, catalyzes the reversible oxidation of malate to oxaloacetate. The sequence is that of Malate dehydrogenase from Thermus thermophilus (strain ATCC BAA-163 / DSM 7039 / HB27).